Reading from the N-terminus, the 285-residue chain is 2-dehydro-3-deoxyphosphooctonate aldolase (285 aa).

The protein belongs to the KdsA family.

It is found in the cytoplasm. It carries out the reaction D-arabinose 5-phosphate + phosphoenolpyruvate + H2O = 3-deoxy-alpha-D-manno-2-octulosonate-8-phosphate + phosphate. It functions in the pathway carbohydrate biosynthesis; 3-deoxy-D-manno-octulosonate biosynthesis; 3-deoxy-D-manno-octulosonate from D-ribulose 5-phosphate: step 2/3. The protein operates within bacterial outer membrane biogenesis; lipopolysaccharide biosynthesis. The protein is 2-dehydro-3-deoxyphosphooctonate aldolase of Acinetobacter baumannii (strain SDF).